A 186-amino-acid polypeptide reads, in one-letter code: Peptidyl-tRNA hydrolase (186 aa).

Tyrosine 14 provides a ligand contact to tRNA. The Proton acceptor role is filled by histidine 19. 3 residues coordinate tRNA: phenylalanine 65, asparagine 67, and asparagine 113.

This sequence belongs to the PTH family. Monomer.

It localises to the cytoplasm. The enzyme catalyses an N-acyl-L-alpha-aminoacyl-tRNA + H2O = an N-acyl-L-amino acid + a tRNA + H(+). In terms of biological role, hydrolyzes ribosome-free peptidyl-tRNAs (with 1 or more amino acids incorporated), which drop off the ribosome during protein synthesis, or as a result of ribosome stalling. Functionally, catalyzes the release of premature peptidyl moieties from peptidyl-tRNA molecules trapped in stalled 50S ribosomal subunits, and thus maintains levels of free tRNAs and 50S ribosomes. This Limosilactobacillus reuteri (strain DSM 20016) (Lactobacillus reuteri) protein is Peptidyl-tRNA hydrolase.